Consider the following 149-residue polypeptide: Large ribosomal subunit protein bL9 (149 aa).

This sequence belongs to the bacterial ribosomal protein bL9 family.

Binds to the 23S rRNA. This is Large ribosomal subunit protein bL9 (rplI) from Geobacillus stearothermophilus (Bacillus stearothermophilus).